The primary structure comprises 583 residues: Septin-9 (583 aa).

At methionine 1 the chain carries N-acetylmethionine. Residues 1 to 14 (MKKSYSGVTRTSSG) are compositionally biased toward polar residues. Positions 1–49 (MKKSYSGVTRTSSGRLRRLADPTGPALKRSFEVEEIEPPNSTPPRRVQT) are disordered. Serine 30 bears the Phosphoserine mark. Threonine 42 and threonine 49 each carry phosphothreonine. An N6-acetyllysine modification is found at lysine 62. The tract at residues 79-105 (DSLSQRSPKPSLRRVELAGAKAPEPMS) is disordered. 3 positions are modified to phosphoserine: serine 82, serine 85, and serine 89. The residue at position 143 (threonine 143) is a Phosphothreonine. Residues 166-252 (VETPASKIPE…TPSCVGDMAD (87 aa)) form a disordered region. Over residues 204–221 (LPSQTLENSEAPMSQLQS) the composition is skewed to polar residues. A Phosphotyrosine modification is found at tyrosine 276. Positions 293 to 565 (QGFEFNIMVV…EAYRVKRLNE (273 aa)) constitute a Septin-type G domain. The G1 motif stretch occupies residues 303–310 (GQSGLGKS). 303 to 310 (GQSGLGKS) contributes to the GTP binding site. Residues serine 325 and serine 330 each carry the phosphoserine modification. GTP is bound by residues threonine 337, glycine 363, 443–451 (KADTLTLEE), glycine 499, and arginine 514. The segment at 360-363 (DTPG) is G3 motif. The tract at residues 442–445 (AKAD) is G4 motif.

Belongs to the TRAFAC class TrmE-Era-EngA-EngB-Septin-like GTPase superfamily. Septin GTPase family. Septins polymerize into heterooligomeric protein complexes that form filaments, and associate with cellular membranes, actin filaments, and microtubules. GTPase activity is required for filament formation. Interacts with SEPTIN2, SEPTIN6, SEPTIN7, SEPTIN11 and SEPTIN14. Interacts with RTKN and ARHGEF18. In terms of tissue distribution, expressed in all tissues examined except muscle. Isoforms are differentially expressed in testes, kidney, liver, heart, spleen and brain.

The protein resides in the cytoplasm. It localises to the cytoskeleton. Its function is as follows. Filament-forming cytoskeletal GTPase. May play a role in cytokinesis (Potential). This Mus musculus (Mouse) protein is Septin-9.